Reading from the N-terminus, the 144-residue chain is MSEQIKKRTFKKFTYSGVALESLLDLKEEQLISLLRCRARRKLRRETPIKHVNFLKKCRASKAAVTQVGEKPALVKTHARNILIVPEMIGSVIGIYNGKVFNQVEVKPEMIGHYTGEFSLSYKSVNHGRPGIGATHSSRFIPLK.

This sequence belongs to the universal ribosomal protein uS19 family.

The chain is Small ribosomal subunit protein uS19 (rps15) from Dictyostelium discoideum (Social amoeba).